The primary structure comprises 150 residues: Lipoprotein signal peptidase (150 aa).

2 helical membrane-spanning segments follow: residues 59-79 and 84-101; these read VFVGVTVLVAIIILAAYRYLP and LLRLSLALMLGGALGNLI. Catalysis depends on residues Asp-111 and Asp-125. The chain crosses the membrane as a helical span at residues 117–137; that stretch reads IWPVFNLADMAIVFGVIILCW.

Belongs to the peptidase A8 family.

The protein resides in the cell membrane. The enzyme catalyses Release of signal peptides from bacterial membrane prolipoproteins. Hydrolyzes -Xaa-Yaa-Zaa-|-(S,diacylglyceryl)Cys-, in which Xaa is hydrophobic (preferably Leu), and Yaa (Ala or Ser) and Zaa (Gly or Ala) have small, neutral side chains.. It participates in protein modification; lipoprotein biosynthesis (signal peptide cleavage). Its function is as follows. This protein specifically catalyzes the removal of signal peptides from prolipoproteins. In Moorella thermoacetica (strain ATCC 39073 / JCM 9320), this protein is Lipoprotein signal peptidase.